The chain runs to 318 residues: Acetyl-coenzyme A carboxylase carboxyl transferase subunit alpha (318 aa).

The CoA carboxyltransferase C-terminal domain occupies 38–292; that stretch reads KLEKRLAKLE…NKTITKSLHA (255 aa).

Belongs to the AccA family. As to quaternary structure, acetyl-CoA carboxylase is a heterohexamer composed of biotin carboxyl carrier protein (AccB), biotin carboxylase (AccC) and two subunits each of ACCase subunit alpha (AccA) and ACCase subunit beta (AccD).

The protein resides in the cytoplasm. It catalyses the reaction N(6)-carboxybiotinyl-L-lysyl-[protein] + acetyl-CoA = N(6)-biotinyl-L-lysyl-[protein] + malonyl-CoA. It participates in lipid metabolism; malonyl-CoA biosynthesis; malonyl-CoA from acetyl-CoA: step 1/1. Component of the acetyl coenzyme A carboxylase (ACC) complex. First, biotin carboxylase catalyzes the carboxylation of biotin on its carrier protein (BCCP) and then the CO(2) group is transferred by the carboxyltransferase to acetyl-CoA to form malonyl-CoA. This is Acetyl-coenzyme A carboxylase carboxyl transferase subunit alpha from Listeria monocytogenes serovar 1/2a (strain ATCC BAA-679 / EGD-e).